Reading from the N-terminus, the 346-residue chain is Deoxyhypusine hydroxylase (346 aa).

HEAT-like PBS-type repeat units follow at residues 71–100 (VLLRHEVAYVIGQISNEKCNDILIKLLNDT), 104–133 (LMVRHEAAEGLAAIGSDSNIEVIKKFLNDE), 213–242 (LKLRYEALFKLRDMETDVSINALGEVLIKD), 246–275 (AIFRHEVAFVLGQALHLNSLKYLISSLQNV), and 279–320 (EMVR…SKDA). 3 residues coordinate Fe cation: histidine 75, histidine 108, and glutamate 109. Fe cation contacts are provided by histidine 250, histidine 283, and glutamate 284.

This sequence belongs to the deoxyhypusine hydroxylase family. Requires Fe(2+) as cofactor.

It catalyses the reaction [eIF5A protein]-deoxyhypusine + AH2 + O2 = [eIF5A protein]-hypusine + A + H2O. It participates in protein modification; eIF5A hypusination. Its function is as follows. Catalyzes the hydroxylation of the N(6)-(4-aminobutyl)-L-lysine intermediate produced by deoxyhypusine synthase/DHPS on a critical lysine of the eukaryotic translation initiation factor 5A/eIF-5A. This is the second step of the post-translational modification of that lysine into an unusual amino acid residue named hypusine. Hypusination is unique to mature eIF-5A factor and is essential for its function. This chain is Deoxyhypusine hydroxylase, found in Plasmodium vivax (strain Salvador I).